We begin with the raw amino-acid sequence, 355 residues long: MVTPTTIRTVDLRSDTVTKPTESMRSAMANAEVDDDVLGNDPTALRLEKEVAEIAGKEAAMFVPSGTMGNLISVLVHCDERGSEVILGDDSHIHIYENGGVSSLGGVHPRTVKNEEDGTMEIGAIEAAVRSPKGDLHHPVTKLICLENTQANCGGRCLPIEYIDKVGELAKKHGLKLHIDGARIFNASVALGVPVKRIVQAADSVSICLSKGIGAPVGSVIVGSKKFITKARWLRKTLGGGMRQIGVLCAAALVALHENVAKLEDDHKKARVLAEGLNRIERLRVNVAAVETNIIYVDIPEDPKFGAEEACKSLEDVGVLVIPQATFRIRIVLHHQISDVDVEYVLSCFEKIFHS.

K211 bears the N6-(pyridoxal phosphate)lysine mark.

The protein belongs to the threonine aldolase family. Pyridoxal 5'-phosphate serves as cofactor. In terms of tissue distribution, expressed in roots, leaf vasculature and flowers.

It carries out the reaction L-threonine = acetaldehyde + glycine. It catalyses the reaction L-allo-threonine = acetaldehyde + glycine. It functions in the pathway amino-acid degradation; L-threonine degradation via aldolase pathway; acetaldehyde and glycine from L-threonine: step 1/1. Its function is as follows. Threonine aldolase involved in threonine degradation to glycine. May play a role in the removal of L-allo-threonine. This chain is Probable low-specificity L-threonine aldolase 2 (THA2), found in Arabidopsis thaliana (Mouse-ear cress).